The chain runs to 199 residues: CASP-like protein 4B1 (199 aa).

Positions 1–32 (MAMVASPDDIVKSPLPPPPPPPPPPLPPAHKD) are disordered. The Cytoplasmic segment spans residues 1 to 53 (MAMVASPDDIVKSPLPPPPPPPPPPLPPAHKDKAAYNPYSGCPAHGGDDGLDG). The span at 14–28 (PLPPPPPPPPPPLPP) shows a compositional bias: pro residues. The chain crosses the membrane as a helical span at residues 54–74 (IVLVLRAAAALLALVAMALVA). The Extracellular portion of the chain corresponds to 75–91 (SCRHGDWMEFTRYQEYR). Residues 92 to 112 (YLLGVAVVASLYSALQAARTF) traverse the membrane as a helical segment. Residues 113 to 127 (RRMRAGTAYAATFLD) lie on the Cytoplasmic side of the membrane. Residues 128–148 (FAGDQAVGYLLITASSAALPI) form a helical membrane-spanning segment. Residues 149–163 (TIRMRSAVVNTFTDV) lie on the Extracellular side of the membrane. Residues 164–184 (VAASISFAFLAFAALAFSALI) traverse the membrane as a helical segment. Over 185 to 199 (AGFRLSSSSSSAYNY) the chain is Cytoplasmic.

Belongs to the Casparian strip membrane proteins (CASP) family. In terms of assembly, homodimer and heterodimers.

Its subcellular location is the cell membrane. This Oryza sativa subsp. japonica (Rice) protein is CASP-like protein 4B1.